The following is a 304-amino-acid chain: Haloalkane dehalogenase (304 aa).

The AB hydrolase-1 domain maps to 42-154; the sequence is PIVFLHGNPT…DSVDLSPEFV (113 aa). Catalysis depends on D114, which acts as the Nucleophile. The active-site Proton donor is E138. H280 acts as the Proton acceptor in catalysis.

Belongs to the haloalkane dehalogenase family. Type 2 subfamily. In terms of assembly, monomer.

It carries out the reaction 1-haloalkane + H2O = a halide anion + a primary alcohol + H(+). Its function is as follows. Catalyzes hydrolytic cleavage of carbon-halogen bonds in halogenated aliphatic compounds, leading to the formation of the corresponding primary alcohols, halide ions and protons. This Agrobacterium fabrum (strain C58 / ATCC 33970) (Agrobacterium tumefaciens (strain C58)) protein is Haloalkane dehalogenase.